We begin with the raw amino-acid sequence, 127 residues long: Aspartate 1-decarboxylase (127 aa).

The active-site Schiff-base intermediate with substrate; via pyruvic acid is S25. Position 25 is a pyruvic acid (Ser) (S25). Residue T57 participates in substrate binding. Catalysis depends on Y58, which acts as the Proton donor. 73 to 75 (GAA) is a substrate binding site.

It belongs to the PanD family. Heterooctamer of four alpha and four beta subunits. It depends on pyruvate as a cofactor. Is synthesized initially as an inactive proenzyme, which is activated by self-cleavage at a specific serine bond to produce a beta-subunit with a hydroxyl group at its C-terminus and an alpha-subunit with a pyruvoyl group at its N-terminus.

It localises to the cytoplasm. The enzyme catalyses L-aspartate + H(+) = beta-alanine + CO2. It participates in cofactor biosynthesis; (R)-pantothenate biosynthesis; beta-alanine from L-aspartate: step 1/1. In terms of biological role, catalyzes the pyruvoyl-dependent decarboxylation of aspartate to produce beta-alanine. The polypeptide is Aspartate 1-decarboxylase (Clostridium botulinum (strain Loch Maree / Type A3)).